Consider the following 400-residue polypeptide: Elongation factor Tu 2 (400 aa).

In terms of domain architecture, tr-type G spans 10–209; sequence KPHVNIGTIG…KVDEYIPTPQ (200 aa). The G1 stretch occupies residues 19–26; the sequence is GHVDHGKT. Residue 19-26 coordinates GTP; the sequence is GHVDHGKT. Thr26 is a binding site for Mg(2+). The interval 60–64 is G2; that stretch reads GITIN. A G3 region spans residues 81-84; it reads DCPG. Residues 81–85 and 136–139 each bind GTP; these read DCPGH and NKAD. The tract at residues 136–139 is G4; sequence NKAD. The segment at 174-176 is G5; that stretch reads SAL.

It belongs to the TRAFAC class translation factor GTPase superfamily. Classic translation factor GTPase family. EF-Tu/EF-1A subfamily. In terms of assembly, monomer.

It is found in the cytoplasm. It catalyses the reaction GTP + H2O = GDP + phosphate + H(+). Its function is as follows. GTP hydrolase that promotes the GTP-dependent binding of aminoacyl-tRNA to the A-site of ribosomes during protein biosynthesis. The protein is Elongation factor Tu 2 of Carboxydothermus hydrogenoformans (strain ATCC BAA-161 / DSM 6008 / Z-2901).